A 303-amino-acid polypeptide reads, in one-letter code: Light-independent protochlorophyllide reductase iron-sulfur ATP-binding protein (303 aa).

Residues 1-24 (MSSVLERPAAPAILPSRQDGEGSV) are disordered. ATP is bound by residues 47-52 (GIGKST) and K76. Position 51 (S51) interacts with Mg(2+). C132 and C166 together coordinate [4Fe-4S] cluster. ATP contacts are provided by residues 217 to 218 (NR) and 241 to 243 (PDL).

This sequence belongs to the NifH/BchL/ChlL family. In terms of assembly, homodimer. Protochlorophyllide reductase is composed of three subunits; BchL, BchN and BchB. [4Fe-4S] cluster serves as cofactor.

It carries out the reaction chlorophyllide a + oxidized 2[4Fe-4S]-[ferredoxin] + 2 ADP + 2 phosphate = protochlorophyllide a + reduced 2[4Fe-4S]-[ferredoxin] + 2 ATP + 2 H2O. It functions in the pathway porphyrin-containing compound metabolism; bacteriochlorophyll biosynthesis (light-independent). Component of the dark-operative protochlorophyllide reductase (DPOR) that uses Mg-ATP and reduced ferredoxin to reduce ring D of protochlorophyllide (Pchlide) to form chlorophyllide a (Chlide). This reaction is light-independent. The L component serves as a unique electron donor to the NB-component of the complex, and binds Mg-ATP. This Rhodospirillum centenum (strain ATCC 51521 / SW) protein is Light-independent protochlorophyllide reductase iron-sulfur ATP-binding protein.